The following is a 315-amino-acid chain: Methionyl-tRNA formyltransferase (315 aa).

113–116 serves as a coordination point for (6S)-5,6,7,8-tetrahydrofolate; the sequence is SLLP.

The protein belongs to the Fmt family.

The enzyme catalyses L-methionyl-tRNA(fMet) + (6R)-10-formyltetrahydrofolate = N-formyl-L-methionyl-tRNA(fMet) + (6S)-5,6,7,8-tetrahydrofolate + H(+). Attaches a formyl group to the free amino group of methionyl-tRNA(fMet). The formyl group appears to play a dual role in the initiator identity of N-formylmethionyl-tRNA by promoting its recognition by IF2 and preventing the misappropriation of this tRNA by the elongation apparatus. This Shigella sonnei (strain Ss046) protein is Methionyl-tRNA formyltransferase.